The primary structure comprises 169 residues: Protein YABBY 7 (169 aa).

The C4-type zinc finger occupies 21 to 48 (CSFCATVLLVSVPCSSVLRVVAVQCGHC). The tract at residues 63–122 (SASIELTPQELDAGPPPGEYSDESSGDDREGRDAEDDAPAPAAAAVANKPPGRKQRTPSA) is disordered.

It belongs to the YABBY family. As to expression, expressed in leaf sheaths and flowers.

It localises to the nucleus. The sequence is that of Protein YABBY 7 (YAB7) from Oryza sativa subsp. japonica (Rice).